Consider the following 504-residue polypeptide: Maturase K (504 aa).

It belongs to the intron maturase 2 family. MatK subfamily.

The protein localises to the plastid. The protein resides in the chloroplast. Functionally, usually encoded in the trnK tRNA gene intron. Probably assists in splicing its own and other chloroplast group II introns. This Pseudoturritis turrita (Tower rock-cress) protein is Maturase K.